We begin with the raw amino-acid sequence, 322 residues long: PI-PLC X domain-containing protein 3 (322 aa).

The region spanning Thr-22–Asn-197 is the PI-PLC X-box domain. Active-site residues include His-37 and His-114.

The protein is PI-PLC X domain-containing protein 3 (plcxd3) of Danio rerio (Zebrafish).